The chain runs to 243 residues: Pyridoxine 5'-phosphate synthase (243 aa).

Residue Asn-9 coordinates 3-amino-2-oxopropyl phosphate. 11 to 12 (DH) is a binding site for 1-deoxy-D-xylulose 5-phosphate. Arg-20 provides a ligand contact to 3-amino-2-oxopropyl phosphate. The active-site Proton acceptor is His-45. 2 residues coordinate 1-deoxy-D-xylulose 5-phosphate: Arg-47 and His-52. The active-site Proton acceptor is Glu-72. 1-deoxy-D-xylulose 5-phosphate is bound at residue Thr-102. The active-site Proton donor is the His-193. 3-amino-2-oxopropyl phosphate-binding positions include Gly-194 and 215–216 (GH).

Belongs to the PNP synthase family. Homooctamer; tetramer of dimers.

The protein resides in the cytoplasm. The enzyme catalyses 3-amino-2-oxopropyl phosphate + 1-deoxy-D-xylulose 5-phosphate = pyridoxine 5'-phosphate + phosphate + 2 H2O + H(+). Its pathway is cofactor biosynthesis; pyridoxine 5'-phosphate biosynthesis; pyridoxine 5'-phosphate from D-erythrose 4-phosphate: step 5/5. Catalyzes the complicated ring closure reaction between the two acyclic compounds 1-deoxy-D-xylulose-5-phosphate (DXP) and 3-amino-2-oxopropyl phosphate (1-amino-acetone-3-phosphate or AAP) to form pyridoxine 5'-phosphate (PNP) and inorganic phosphate. The sequence is that of Pyridoxine 5'-phosphate synthase from Escherichia coli O6:H1 (strain CFT073 / ATCC 700928 / UPEC).